Consider the following 62-residue polypeptide: Cytotoxin 7 (62 aa).

A signal peptide spans Y1 to T2. 4 cysteine pairs are disulfide-bonded: C5–C23, C16–C40, C44–C55, and C56–C61.

The protein belongs to the three-finger toxin family. Short-chain subfamily. Type IA cytotoxin sub-subfamily. As to quaternary structure, monomer in solution; Homodimer and oligomer in the presence of negatively charged lipids forming a pore with a size ranging between 20 and 30 Angstroms. Expressed by the venom gland.

Its subcellular location is the secreted. It is found in the target cell membrane. Shows cytolytic activity on many different cells by forming pore in lipid membranes. In vivo, increases heart rate or kills the animal by cardiac arrest. In addition, it binds to heparin with high affinity, interacts with Kv channel-interacting protein 1 (KCNIP1) in a calcium-independent manner, and binds to integrin alpha-V/beta-3 (ITGAV/ITGB3) with moderate affinity. In Naja sputatrix (Malayan spitting cobra), this protein is Cytotoxin 7.